The sequence spans 145 residues: Probable D-aminoacyl-tRNA deacylase (145 aa).

This sequence belongs to the DTD family. In terms of assembly, homodimer.

The protein resides in the cytoplasm. It catalyses the reaction glycyl-tRNA(Ala) + H2O = tRNA(Ala) + glycine + H(+). It carries out the reaction a D-aminoacyl-tRNA + H2O = a tRNA + a D-alpha-amino acid + H(+). Its function is as follows. An aminoacyl-tRNA editing enzyme that deacylates mischarged D-aminoacyl-tRNAs. Also deacylates mischarged glycyl-tRNA(Ala), protecting cells against glycine mischarging by AlaRS. Acts via tRNA-based rather than protein-based catalysis; rejects L-amino acids rather than detecting D-amino acids in the active site. By recycling D-aminoacyl-tRNA to D-amino acids and free tRNA molecules, this enzyme counteracts the toxicity associated with the formation of D-aminoacyl-tRNA entities in vivo and helps enforce protein L-homochirality. The sequence is that of Probable D-aminoacyl-tRNA deacylase from Shigella flexneri serotype 5b (strain 8401).